The chain runs to 418 residues: MIDLKFLRENPDAVRASQRLRGEDPALVEVLLDADTARRAAISTADTLRAEQKAASKKVGKATPEERPALLAAASELAAQVKSAEAEQVVTEAAFTEAHKAISNVVIDGVPAGGEQDFALRELVGEPHPIENPKDHVELGESLGLFDMERGAKVSGARFYFLTGYGALLQLGLLQLAVQTAVANGFTLLIPPVLVKPEIMGGTGFLGAHADEVYHLEEDDLYLVGTSEVPIAGYHSGEILDLNNGPLRYAGWSSCFRREAGSYGKDTRGIIRVHQFDKVEAFVYCKPEDAEAEHEKILGWERQMLGHIEVPYRVIDVAAGDLGSSAARKFDCEAWVPTQRAYRELTSTSNCTTFQARRLAVRYRDESGKPQIAATLNGTLATTRWLVAILENHQQPDGSVRVPTALVPFVGTEVLEPK.

226 to 228 (TSE) lines the L-serine pocket. ATP is bound by residues 257–259 (RRE) and V273. An L-serine-binding site is contributed by E280. 344 to 347 (ELTS) provides a ligand contact to ATP. Position 379 (T379) interacts with L-serine.

Belongs to the class-II aminoacyl-tRNA synthetase family. Type-1 seryl-tRNA synthetase subfamily. As to quaternary structure, homodimer. The tRNA molecule binds across the dimer.

Its subcellular location is the cytoplasm. It catalyses the reaction tRNA(Ser) + L-serine + ATP = L-seryl-tRNA(Ser) + AMP + diphosphate + H(+). The catalysed reaction is tRNA(Sec) + L-serine + ATP = L-seryl-tRNA(Sec) + AMP + diphosphate + H(+). Its pathway is aminoacyl-tRNA biosynthesis; selenocysteinyl-tRNA(Sec) biosynthesis; L-seryl-tRNA(Sec) from L-serine and tRNA(Sec): step 1/1. Functionally, catalyzes the attachment of serine to tRNA(Ser). Is also able to aminoacylate tRNA(Sec) with serine, to form the misacylated tRNA L-seryl-tRNA(Sec), which will be further converted into selenocysteinyl-tRNA(Sec). This Mycobacteroides abscessus (strain ATCC 19977 / DSM 44196 / CCUG 20993 / CIP 104536 / JCM 13569 / NCTC 13031 / TMC 1543 / L948) (Mycobacterium abscessus) protein is Serine--tRNA ligase.